We begin with the raw amino-acid sequence, 47 residues long: Rhodotorucin-A peptides type 3 (47 aa).

A propeptide spanning residues 1–3 (MVA) is cleaved from the precursor. Cys-14 carries S-farnesyl cysteine lipidation. A propeptide spanning residues 15 to 18 (TVAK) is cleaved from the precursor. A lipid anchor (S-farnesyl cysteine) is attached at Cys-29. A propeptide spanning residues 30–33 (TVSK) is cleaved from the precursor. Cys-44 is lipidated: S-farnesyl cysteine. Positions 45-47 (TVA) are excised as a propeptide.

The protein localises to the cell membrane. Rhodotorucin-A is a mating pheromone in cells of mating type A of Rhodosporidium toruloides. The chain is Rhodotorucin-A peptides type 3 (RHA3) from Rhodotorula toruloides (Yeast).